The following is a 600-amino-acid chain: Putative fucosyltransferase R654 (600 aa).

This sequence belongs to the glycosyltransferase 10 family.

The protein is Putative fucosyltransferase R654 of Acanthamoeba polyphaga mimivirus (APMV).